Reading from the N-terminus, the 838-residue chain is E3 ubiquitin-protein ligase RNF19A (838 aa).

A disordered region spans residues 41 to 61 (DRDLQSSASSVSLPSVKKAPK). Low complexity predominate over residues 46 to 57 (SSASSVSLPSVK). Positions 128 to 351 (DFIECPLCLL…LSPSGCTFWG (224 aa)) are TRIAD supradomain. Cysteine 132, cysteine 135, cysteine 150, histidine 152, cysteine 155, cysteine 158, cysteine 176, cysteine 179, cysteine 219, cysteine 224, cysteine 241, cysteine 246, cysteine 251, cysteine 254, histidine 259, cysteine 264, cysteine 301, and cysteine 304 together coordinate Zn(2+). An RING-type 1 zinc finger spans residues 132–179 (CPLCLLRHSKDRFPDIMTCHHRSCVDCLRQYLRIEISESRVNISCPEC). Residues 199–264 (EKYEEFMLRR…KQIWHPNQTC (66 aa)) form an IBR-type zinc finger. The RING-type 2; atypical zinc finger occupies 301-332 (CPRCAAYIIKMNDGSCNHMTCAVCGCEFCWLC). The active site involves cysteine 316. Zn(2+)-binding residues include cysteine 321, cysteine 324, cysteine 329, cysteine 332, histidine 340, and cysteine 347. Helical transmembrane passes span 368 to 388 (LVGA…AMII) and 424 to 444 (VIVS…IMLA). Disordered stretches follow at residues 622 to 685 (SKPS…GNMK) and 700 to 721 (QQST…PSVA). Residues 630-662 (NSGSSSVDDGSATRSHAGGSSSGLPEGKSSATK) show a composition bias toward polar residues. Serine 631 carries the post-translational modification Phosphoserine. Residues 660–838 (ATKWSKEATA…ELKVAIQTEI (179 aa)) form an interaction with CASR region. Residues 671–683 (KKSKSGKLRKKGN) are compositionally biased toward basic residues. Positions 700–717 (QQSTNSSEFEAPSLSDSM) are enriched in polar residues.

Belongs to the RBR family. RNF19 subfamily. In terms of assembly, interacts with UBE2L3 and UBE2L6. Interacts with transcription factor Sp1. Interacts with VCP, CASR, SNCAIP and with some SOD1 variants which cause amyotrophic lateral sclerosis, but not with wild-type SOD1. Widely expressed, with highest levels in heart. Ubiquitously expressed in the central nervous system.

Its subcellular location is the membrane. The protein localises to the cytoplasm. It localises to the cytoskeleton. The protein resides in the microtubule organizing center. It is found in the centrosome. The enzyme catalyses [E2 ubiquitin-conjugating enzyme]-S-ubiquitinyl-L-cysteine + [acceptor protein]-L-lysine = [E2 ubiquitin-conjugating enzyme]-L-cysteine + [acceptor protein]-N(6)-ubiquitinyl-L-lysine.. It functions in the pathway protein modification; protein ubiquitination. Its function is as follows. E3 ubiquitin-protein ligase which accepts ubiquitin from E2 ubiquitin-conjugating enzymes UBE2L3 and UBE2L6 in the form of a thioester and then directly transfers the ubiquitin to targeted substrates, such as SNCAIP or CASR. Specifically ubiquitinates pathogenic SOD1 variants, which leads to their proteasomal degradation and to neuronal protection. The chain is E3 ubiquitin-protein ligase RNF19A (RNF19A) from Homo sapiens (Human).